Reading from the N-terminus, the 61-residue chain is MDIESEVPVVGKQMLAGNRGKQKTRRSVAKDAIRKPASDSTNGGNWVNVADKIEVHIHFNF.

Residues 1 to 45 form a disordered region; that stretch reads MDIESEVPVVGKQMLAGNRGKQKTRRSVAKDAIRKPASDSTNGGN. Residues 17–35 form an RNA-binding region; it reads GNRGKQKTRRSVAKDAIRK. Positions 28-37 are enriched in basic and acidic residues; sequence VAKDAIRKPA.

Belongs to the carmovirus double gene block protein 1 family. Homodimer.

Its function is as follows. Cell-to-cell movement. Displays RNA-binding activity. This chain is Double gene block protein 1, found in Carnation mottle virus (CarMV).